Here is a 603-residue protein sequence, read N- to C-terminus: Sulfoacetaldehyde acetyltransferase (603 aa).

Belongs to the TPP enzyme family. Mg(2+) serves as cofactor. Thiamine diphosphate is required as a cofactor.

It carries out the reaction acetyl phosphate + sulfite + H(+) = sulfoacetaldehyde + phosphate. In terms of biological role, catalyzes the degradation of sulfoacetaldehyde into sulfite and acetyl phosphate. Involved in sulfolactate degradation. The polypeptide is Sulfoacetaldehyde acetyltransferase (Roseovarius nubinhibens (strain ATCC BAA-591 / DSM 15170 / ISM)).